The following is a 207-amino-acid chain: MANVTLFDQTGKEAGQVVLNDAVFGIEPNESVVFDVIISQRASLRQGTHAVKNRSAVSGGGRKPWRQKGTGRARQGSIRSPQWRGGGVVFGPTPRSYGYKLPQKVRRLALKSVYSEKVAENKFVAVDALSFTAPKTAEFAKVLAALSIDSKVLVILEEGNEFAALSARNLPNVKVATATTASVLDIANSDKLLVTQAAISKIEEVLA.

The disordered stretch occupies residues 49-78; that stretch reads HAVKNRSAVSGGGRKPWRQKGTGRARQGSI.

Belongs to the universal ribosomal protein uL4 family. Part of the 50S ribosomal subunit.

In terms of biological role, one of the primary rRNA binding proteins, this protein initially binds near the 5'-end of the 23S rRNA. It is important during the early stages of 50S assembly. It makes multiple contacts with different domains of the 23S rRNA in the assembled 50S subunit and ribosome. Its function is as follows. Forms part of the polypeptide exit tunnel. The polypeptide is Large ribosomal subunit protein uL4 (Streptococcus pneumoniae serotype 19F (strain G54)).